The sequence spans 350 residues: Nicotinate-nucleotide--dimethylbenzimidazole phosphoribosyltransferase (350 aa).

Glutamate 317 acts as the Proton acceptor in catalysis.

Belongs to the CobT family.

It catalyses the reaction 5,6-dimethylbenzimidazole + nicotinate beta-D-ribonucleotide = alpha-ribazole 5'-phosphate + nicotinate + H(+). Its pathway is nucleoside biosynthesis; alpha-ribazole biosynthesis; alpha-ribazole from 5,6-dimethylbenzimidazole: step 1/2. Catalyzes the synthesis of alpha-ribazole-5'-phosphate from nicotinate mononucleotide (NAMN) and 5,6-dimethylbenzimidazole (DMB). The protein is Nicotinate-nucleotide--dimethylbenzimidazole phosphoribosyltransferase of Shewanella sp. (strain W3-18-1).